The chain runs to 97 residues: Small cell adhesion glycoprotein (97 aa).

The Extracellular segment spans residues 1–36 (MNNLPATPSPEELMTTPVFQAPETLSPQAEEASTAL). The O-linked (GalNAc...) threonine glycan is linked to threonine 7. The O-linked (GalNAc...) serine glycan is linked to serine 9. Threonine 15, threonine 16, and threonine 24 each carry an O-linked (GalNAc...) threonine glycan. Serine 26 carries O-linked (GalNAc...) serine glycosylation. Residues 37–57 (IAVVITVVFLTLLSVVTLIFF) traverse the membrane as a helical; Signal-anchor for type III membrane protein segment. Residues 58 to 97 (HLYKNKGSYVTYEPAEGEPSAILQMETDSAKGREKEEYFI) are Cytoplasmic-facing.

It belongs to the SMAGP family. O-glycosylated. The O-glycan is modified with sialic acid residues.

The protein resides in the cell membrane. It localises to the cytoplasmic vesicle membrane. In terms of biological role, may play a role in epithelial cell-cell contacts. May play a role in tumor invasiveness and metastasis formation. This is Small cell adhesion glycoprotein (Smagp) from Mus musculus (Mouse).